The sequence spans 91 residues: Large ribosomal subunit protein uL23c (91 aa).

It belongs to the universal ribosomal protein uL23 family. Part of the 50S ribosomal subunit.

The protein resides in the plastid. The protein localises to the chloroplast. In terms of biological role, binds to 23S rRNA. In Pinus koraiensis (Korean pine), this protein is Large ribosomal subunit protein uL23c (rpl23).